We begin with the raw amino-acid sequence, 592 residues long: Aspartate--tRNA(Asp/Asn) ligase (592 aa).

Glutamate 182 contributes to the L-aspartate binding site. An aspartate region spans residues 206-209; that stretch reads QIFK. Arginine 228 provides a ligand contact to L-aspartate. Residues 228–230 and glutamine 237 each bind ATP; that span reads RDE. Histidine 455 provides a ligand contact to L-aspartate. Position 489 (glutamate 489) interacts with ATP. Arginine 496 contacts L-aspartate. 541–544 provides a ligand contact to ATP; the sequence is GLDR.

This sequence belongs to the class-II aminoacyl-tRNA synthetase family. Type 1 subfamily. As to quaternary structure, homodimer.

It localises to the cytoplasm. It carries out the reaction tRNA(Asx) + L-aspartate + ATP = L-aspartyl-tRNA(Asx) + AMP + diphosphate. Aspartyl-tRNA synthetase with relaxed tRNA specificity since it is able to aspartylate not only its cognate tRNA(Asp) but also tRNA(Asn). Reaction proceeds in two steps: L-aspartate is first activated by ATP to form Asp-AMP and then transferred to the acceptor end of tRNA(Asp/Asn). In Thermoanaerobacter sp. (strain X514), this protein is Aspartate--tRNA(Asp/Asn) ligase.